The sequence spans 173 residues: Shikimate kinase (173 aa).

Gly14 to Thr19 provides a ligand contact to ATP. Ser18 is a Mg(2+) binding site. Asp36, Arg60, and Gly82 together coordinate substrate. Position 120 (Arg120) interacts with ATP. Arg140 lines the substrate pocket. Gln157 is a binding site for ATP.

It belongs to the shikimate kinase family. In terms of assembly, monomer. Mg(2+) is required as a cofactor.

It is found in the cytoplasm. It catalyses the reaction shikimate + ATP = 3-phosphoshikimate + ADP + H(+). The protein operates within metabolic intermediate biosynthesis; chorismate biosynthesis; chorismate from D-erythrose 4-phosphate and phosphoenolpyruvate: step 5/7. In terms of biological role, catalyzes the specific phosphorylation of the 3-hydroxyl group of shikimic acid using ATP as a cosubstrate. In Baumannia cicadellinicola subsp. Homalodisca coagulata, this protein is Shikimate kinase.